The primary structure comprises 201 residues: Large ribosomal subunit protein uL4 (201 aa).

Positions 43-73 (TRAQKTRSEVSGGGAKPWRQKGTGRARAGTT) are disordered.

Belongs to the universal ribosomal protein uL4 family. In terms of assembly, part of the 50S ribosomal subunit.

One of the primary rRNA binding proteins, this protein initially binds near the 5'-end of the 23S rRNA. It is important during the early stages of 50S assembly. It makes multiple contacts with different domains of the 23S rRNA in the assembled 50S subunit and ribosome. Functionally, forms part of the polypeptide exit tunnel. This is Large ribosomal subunit protein uL4 from Colwellia psychrerythraea (strain 34H / ATCC BAA-681) (Vibrio psychroerythus).